We begin with the raw amino-acid sequence, 111 residues long: Large ribosomal subunit protein eL31 (111 aa).

Belongs to the eukaryotic ribosomal protein eL31 family.

The polypeptide is Large ribosomal subunit protein eL31 (RPL31) (Tetrahymena thermophila (strain SB210)).